Here is a 670-residue protein sequence, read N- to C-terminus: WD repeat-containing protein 48 homolog (670 aa).

WD repeat units lie at residues 13–52 (RHRN…SQEP), 59–98 (HHND…CMST), 101–140 (THRD…ALTA), 152–191 (GSKD…KIAK), 194–233 (GHTE…CIQT), 236–275 (VHSE…NSVL), and 278–317 (EERA…KLSN). Residues 321 to 348 (SSNSSINSGGGGDGTPVTNSASNATPAS) form a disordered region. The span at 338-348 (TNSASNATPAS) shows a compositional bias: low complexity. A WD 8 repeat occupies 359 to 398 (KGGAAIKKYHVLNDKRFMLTKDSEQNVAIYDVLKVKKVED). A compositionally biased stretch (gly residues) spans 613 to 625 (GGGGGSSTGGGGN). The interval 613 to 645 (GGGGGSSTGGGGNSNSSQNNSQSDANSEGSQVP) is disordered. The segment covering 626-635 (SNSSQNNSQS) has biased composition (low complexity).

Belongs to the WD repeat WDR48 family. Catalytic component of the Usp12-46 deubiquitylase complex consisting of Usp12-46, Wdr20 and Uaf1; regulatory subunit that, together wtih Wdr20, stabilizes Usp12-46. The Usp12-46 deubiquitylase complex associates with arr/arrow; the interaction leads to deubiquitination and stabilization of arr/arrow.

Regulatory component of the Usp12-46 deubiquitylase complex. activates deubiquitination by increasing the catalytic turnover without increasing the affinity of deubiquitinating enzymes for the substrate. The complex deubiquitylates the wg/wingless-signaling receptor arr/arrow, which stabilizes the receptor and increases its concentration at the cell surface; this enhances the sensitivity of cells to wg/wingless-signal stimulation. This increases the amplitude and spatial range of the signaling response to the wg/wingless morphogen gradient, facilitating the precise concentration-dependent regulation of its target genes. Together with Wdr20 and Usp12-46 required for wg/wingless-mediated signaling in the wing imaginal disc and for wg/wingless-dependent regulation of intestinal stem cell proliferation. In Culex quinquefasciatus (Southern house mosquito), this protein is WD repeat-containing protein 48 homolog.